A 184-amino-acid polypeptide reads, in one-letter code: GTP-binding protein Rheb (184 aa).

Lys-8 participates in a covalent cross-link: Glycyl lysine isopeptide (Lys-Gly) (interchain with G-Cter in ubiquitin). 8 residues coordinate GDP: Ser-16, Val-17, Gly-18, Lys-19, Ser-20, Ser-21, Val-32, and Asp-33. A GTP-binding site is contributed by Ser-16. Positions 18, 19, 20, 21, and 32 each coordinate GTP. Residue Ser-20 coordinates Mg(2+). Positions 35, 38, 119, and 122 each coordinate GTP. Positions 35-43 (YDPTIENTF) match the Effector region motif. Thr-38 serves as a coordination point for Mg(2+). GDP-binding residues include Asn-119 and Asp-122. Ser-130 is subject to Phosphoserine; by MAPKAPK5. Ala-150 provides a ligand contact to GDP. Ala-150 is a GTP binding site. Cys-181 is modified (cysteine methyl ester). A lipid anchor (S-farnesyl cysteine) is attached at Cys-181. Residues 182-184 (SVM) constitute a propeptide, removed in mature form.

Belongs to the small GTPase superfamily. Rheb family. As to quaternary structure, associates with the mTORC1 complex (MTOR, MLST8 and RPTOR) in a guanyl nucleotide-independent manner. Interacts with TSC2. Interacts with MCRS1; the interaction maintains RHEB at the lysosome in its active GTP-bound form and prevents its interaction with the mTORC1 complex inhibitor TSC2, ensuring activation of the mTORC1 complex by RHEB. Interacts (when prenylated) with PDE6D; this promotes release from membranes. Farnesylation is important for efficiently activating mTORC1-mediated signaling. In terms of processing, polyubiquitinated in response to amino acid, promoting its interaction with MTOR and mTORC1 activation. Deubiquitination by ATXN3 promotes recruitment of the TSC-TBC complex and RHEB inactivation by TSC2. Monoubiquitinated at Lys-8 by RNF152, promoting its association with the TSC-TBC complex. Deubiquitinated at Lys-8 by USP4, promoting mTORC1 activation. Post-translationally, phosphorylation by MAPKAPK5 impairs GTP-binding and inactivation. In terms of tissue distribution, ubiquitous. Highest levels observed in skeletal and cardiac muscle.

It localises to the endomembrane system. The protein resides in the lysosome membrane. The protein localises to the golgi apparatus membrane. Its subcellular location is the endoplasmic reticulum membrane. It is found in the cytoplasm. It localises to the cytosol. It catalyses the reaction GTP + H2O = GDP + phosphate + H(+). Its activity is regulated as follows. Alternates between an inactive form bound to GDP and an active form bound to GTP. Inactivated by the TSC-TBC complex via the GTPase activating protein (GAP) domain of TSC2. Autoinhibited by Tyr-35, which constrains the active site conformation, restricting the access of the catalytic Asp-65 to the nucleotide-binding pocket. Specifically inhibited by NR1 (4-bromo-6-(3,4-dichlorophenylthio)-1-(4-(dimethylcarbamoyl)benzyl)-1H-indole-2-carboxylic acid). Its function is as follows. Small GTPase that acts as an allosteric activator of the canonical mTORC1 complex, an evolutionarily conserved central nutrient sensor that stimulates anabolic reactions and macromolecule biosynthesis to promote cellular biomass generation and growth. In response to nutrients, growth factors or amino acids, specifically activates the protein kinase activity of MTOR, the catalytic component of the mTORC1 complex: acts by causing a conformational change that allows the alignment of residues in the active site of MTOR, thereby enhancing the phosphorylation of ribosomal protein S6 kinase (RPS6KB1 and RPS6KB2) and EIF4EBP1 (4E-BP1). RHEB is also required for localization of the TSC-TBC complex to lysosomal membranes. In response to starvation, RHEB is inactivated by the TSC-TBC complex, preventing activation of mTORC1. Has low intrinsic GTPase activity. In Homo sapiens (Human), this protein is GTP-binding protein Rheb.